The sequence spans 315 residues: tRNA dimethylallyltransferase (315 aa).

9 to 16 (GPTASGKT) is a binding site for ATP. Position 11 to 16 (11 to 16 (TASGKT)) interacts with substrate. Interaction with substrate tRNA regions lie at residues 34 to 37 (DSLL) and 158 to 162 (QRIQR).

Belongs to the IPP transferase family. In terms of assembly, monomer. Mg(2+) is required as a cofactor.

It catalyses the reaction adenosine(37) in tRNA + dimethylallyl diphosphate = N(6)-dimethylallyladenosine(37) in tRNA + diphosphate. Functionally, catalyzes the transfer of a dimethylallyl group onto the adenine at position 37 in tRNAs that read codons beginning with uridine, leading to the formation of N6-(dimethylallyl)adenosine (i(6)A). This is tRNA dimethylallyltransferase from Acidithiobacillus ferrooxidans (strain ATCC 53993 / BNL-5-31) (Leptospirillum ferrooxidans (ATCC 53993)).